We begin with the raw amino-acid sequence, 242 residues long: Ethanolamine ammonia-lyase small subunit (242 aa).

V155 and E176 together coordinate adenosylcob(III)alamin.

This sequence belongs to the EutC family. The basic unit is a heterodimer which dimerizes to form tetramers. The heterotetramers trimerize; 6 large subunits form a core ring with 6 small subunits projecting outwards. It depends on adenosylcob(III)alamin as a cofactor.

It is found in the bacterial microcompartment. The catalysed reaction is ethanolamine = acetaldehyde + NH4(+). Its pathway is amine and polyamine degradation; ethanolamine degradation. Catalyzes the deamination of various vicinal amino-alcohols to oxo compounds. Allows this organism to utilize ethanolamine as the sole source of nitrogen and carbon in the presence of external vitamin B12. The protein is Ethanolamine ammonia-lyase small subunit of Clostridium acetobutylicum (strain ATCC 824 / DSM 792 / JCM 1419 / IAM 19013 / LMG 5710 / NBRC 13948 / NRRL B-527 / VKM B-1787 / 2291 / W).